The chain runs to 491 residues: MVFGEFFHRPGQDEELVNLNVGGFKQSVDQSTLLRFPHTRLGKLLTCHSEEAILELCDDYSVADKEYYFDRNPSLFRYVLNFYYTGKLHVMEELCVFSFCQEIEYWGINELFIDSCCSNRYQERKEENHEKDWDQKSHDVSTDSSFEESSLFEKELEKFDTLRFGQLRKKIWIRMENPAYCLSAKLIAISSLSVVLASIVAMCVHSMSEFQNEDGEVDDPVLEGVEIACIAWFTGELAVRLAAAPCQKKFWKNPLNIIDFVSIIPFYATLAVDTKEEESEDIENMGKVVQILRLMRIFRILKLARHSVGLRSLGATLRHSYHEVGLLLLFLSVGISIFSVLIYSVEKDDHTSSLTSIPICWWWATISMTTVGYGDTHPVTLAGKLIASTCIICGILVVALPITIIFNKFSKYYQKQKDIDVDQCSEDAPEKCHELPYFNIRDIYAQRMHTFITSLSSVGIVVSDPDSTDASSIEDNEDICNTTSLENCTAK.

The Cytoplasmic segment spans residues 1–182 (MVFGEFFHRP…IRMENPAYCL (182 aa)). The helical transmembrane segment at 183–204 (SAKLIAISSLSVVLASIVAMCV) threads the bilayer. The Extracellular portion of the chain corresponds to 205–220 (HSMSEFQNEDGEVDDP). A helical transmembrane segment spans residues 221–243 (VLEGVEIACIAWFTGELAVRLAA). The Cytoplasmic portion of the chain corresponds to 244-254 (APCQKKFWKNP). A helical membrane pass occupies residues 255–275 (LNIIDFVSIIPFYATLAVDTK). The Extracellular segment spans residues 276–285 (EEESEDIENM). Residues 286 to 306 (GKVVQILRLMRIFRILKLARH) form a helical; Voltage-sensor membrane-spanning segment. Over 307 to 321 (SVGLRSLGATLRHSY) the chain is Cytoplasmic. Residues 322–343 (HEVGLLLLFLSVGISIFSVLIY) traverse the membrane as a helical segment. Residues 344-357 (SVEKDDHTSSLTSI) lie on the Extracellular side of the membrane. An intramembrane region (helical) is located at residues 358–369 (PICWWWATISMT). A Selectivity filter motif is present at residues 370 to 375 (TVGYGD). Residues 370 to 377 (TVGYGDTH) lie within the membrane without spanning it. At 378–384 (PVTLAGK) the chain is on the extracellular side. A helical membrane pass occupies residues 385 to 413 (LIASTCIICGILVVALPITIIFNKFSKYY). Over 414–491 (QKQKDIDVDQ…TTSLENCTAK (78 aa)) the chain is Cytoplasmic.

Belongs to the potassium channel family. S (TC 1.A.1.2) subfamily. Kv9.3/KCNS3 sub-subfamily. As to quaternary structure, heterotetramer with KCNB1. Does not form homomultimers. As to expression, detected in whole normal term placental and placental chorionic plate arteries and veins. Detected in syncytiotrophoblast and in blood vessel endothelium within intermediate villi and chorionic plate (at protein level). Detected in most tissues, but not in peripheral blood lymphocytes. The highest levels of expression are in lung.

The protein localises to the cell membrane. Its function is as follows. Potassium channel regulatory subunit that modulates the delayed rectifier potassium channel activity of KCNB1 by namely slowing down the deactivation and inactivation time constants. While it does not form functional channel on its own, it can form functional heterotetrameric channels with KCNB1. The sequence is that of Delayed-rectifier potassium channel regulatory subunit KCNS3 from Homo sapiens (Human).